The following is a 309-amino-acid chain: Porphobilinogen deaminase (309 aa).

Cys-241 carries the post-translational modification S-(dipyrrolylmethanemethyl)cysteine.

The protein belongs to the HMBS family. In terms of assembly, monomer. The cofactor is dipyrromethane.

The catalysed reaction is 4 porphobilinogen + H2O = hydroxymethylbilane + 4 NH4(+). It functions in the pathway porphyrin-containing compound metabolism; protoporphyrin-IX biosynthesis; coproporphyrinogen-III from 5-aminolevulinate: step 2/4. Tetrapolymerization of the monopyrrole PBG into the hydroxymethylbilane pre-uroporphyrinogen in several discrete steps. The sequence is that of Porphobilinogen deaminase from Bacillus cereus (strain AH187).